The primary structure comprises 425 residues: Serine--tRNA ligase (425 aa).

233–235 serves as a coordination point for L-serine; it reads TAE. Residue 264 to 266 coordinates ATP; the sequence is RAE. Glu287 contacts L-serine. Position 351–354 (351–354) interacts with ATP; it reads EISS. An L-serine-binding site is contributed by Ser387.

It belongs to the class-II aminoacyl-tRNA synthetase family. Type-1 seryl-tRNA synthetase subfamily. Homodimer. The tRNA molecule binds across the dimer.

It localises to the cytoplasm. It carries out the reaction tRNA(Ser) + L-serine + ATP = L-seryl-tRNA(Ser) + AMP + diphosphate + H(+). The enzyme catalyses tRNA(Sec) + L-serine + ATP = L-seryl-tRNA(Sec) + AMP + diphosphate + H(+). The protein operates within aminoacyl-tRNA biosynthesis; selenocysteinyl-tRNA(Sec) biosynthesis; L-seryl-tRNA(Sec) from L-serine and tRNA(Sec): step 1/1. In terms of biological role, catalyzes the attachment of serine to tRNA(Ser). Is also able to aminoacylate tRNA(Sec) with serine, to form the misacylated tRNA L-seryl-tRNA(Sec), which will be further converted into selenocysteinyl-tRNA(Sec). The polypeptide is Serine--tRNA ligase (Clostridium botulinum (strain Alaska E43 / Type E3)).